We begin with the raw amino-acid sequence, 1013 residues long: A-type ATP synthase subunit A (1013 aa).

A DOD-type homing endonuclease domain is found at 392 to 525 (FLGYVIGDGT…LTYLLAKLGI (134 aa)).

This sequence belongs to the ATPase alpha/beta chains family. As to quaternary structure, has multiple subunits with at least A(3), B(3), C, D, E, F, H, I and proteolipid K(x). Post-translationally, this protein undergoes a protein self splicing that involves a post-translational excision of the VDE intervening region (intein) followed by peptide ligation.

The protein localises to the cell membrane. The enzyme catalyses ATP + H2O + 4 H(+)(in) = ADP + phosphate + 5 H(+)(out). Component of the A-type ATP synthase that produces ATP from ADP in the presence of a proton gradient across the membrane. The A chain is the catalytic subunit. The chain is A-type ATP synthase subunit A from Pyrococcus furiosus (strain ATCC 43587 / DSM 3638 / JCM 8422 / Vc1).